The primary structure comprises 154 residues: Ribosome maturation factor RimP (154 aa).

The protein belongs to the RimP family.

It is found in the cytoplasm. Required for maturation of 30S ribosomal subunits. The polypeptide is Ribosome maturation factor RimP (Hydrogenobaculum sp. (strain Y04AAS1)).